The sequence spans 456 residues: uncharacterized protein (456 aa).

Residues 277 to 440 enclose the YrdC-like domain; sequence IKNTKTIKQL…TKQLVRTTAK (164 aa).

This is an uncharacterized protein from Mycoplasma genitalium (strain ATCC 33530 / DSM 19775 / NCTC 10195 / G37) (Mycoplasmoides genitalium).